The primary structure comprises 141 residues: Translation initiation factor 2 subunit beta (141 aa).

It belongs to the eIF-2-beta/eIF-5 family. In terms of assembly, heterotrimer composed of an alpha, a beta and a gamma chain.

Its function is as follows. eIF-2 functions in the early steps of protein synthesis by forming a ternary complex with GTP and initiator tRNA. The sequence is that of Translation initiation factor 2 subunit beta from Sulfolobus acidocaldarius (strain ATCC 33909 / DSM 639 / JCM 8929 / NBRC 15157 / NCIMB 11770).